We begin with the raw amino-acid sequence, 388 residues long: MANDYFFTSESVSEGHPDKVADQISDAILDAILAQDPTARVAAETLCNTGLVVLAGEITTHANVDYIQVARNTLREIGYDNTDYGIDYKGCAVLVAYDKQSPDIAQGVDKAHDDGLDQGAGDQGLMFGYACDETSELMPMPIHLSHRLVERQSQLRRDGRLNWLRPDAKSQVTLRYVDGKPDSIDTVVLSTQHDEEISLEKLREAVIEEIIKPVLPKHLIKGAINFLVNPTGRFVIGGPQGDCGLTGRKIIVDTYGGAAPHGGGAFSGKDPSKVDRSAAYAGRYVAKNVVAAGLASKCLIQISYAIGVAKPTSVMVSTFGTGKISDEKIAQLVSENFDLRPKGIVKMLNLLRPIYRKTAAYGHFGREEPEFTWEQTDKAAALRAAAGL.

Residue His-16 coordinates ATP. Asp-18 contributes to the Mg(2+) binding site. Glu-44 provides a ligand contact to K(+). Residues Glu-57 and Gln-100 each coordinate L-methionine. Residues 100-110 (QSPDIAQGVDK) form a flexible loop region. ATP is bound by residues 167-169 (DAK), 233-234 (RF), Asp-242, 248-249 (RK), Ala-265, and Lys-269. Asp-242 serves as a coordination point for L-methionine. Lys-273 is an L-methionine binding site.

This sequence belongs to the AdoMet synthase family. As to quaternary structure, homotetramer; dimer of dimers. The cofactor is Mg(2+). K(+) serves as cofactor.

It is found in the cytoplasm. The enzyme catalyses L-methionine + ATP + H2O = S-adenosyl-L-methionine + phosphate + diphosphate. It participates in amino-acid biosynthesis; S-adenosyl-L-methionine biosynthesis; S-adenosyl-L-methionine from L-methionine: step 1/1. Its function is as follows. Catalyzes the formation of S-adenosylmethionine (AdoMet) from methionine and ATP. The overall synthetic reaction is composed of two sequential steps, AdoMet formation and the subsequent tripolyphosphate hydrolysis which occurs prior to release of AdoMet from the enzyme. This chain is S-adenosylmethionine synthase, found in Polynucleobacter asymbioticus (strain DSM 18221 / CIP 109841 / QLW-P1DMWA-1) (Polynucleobacter necessarius subsp. asymbioticus).